Consider the following 421-residue polypeptide: Histidine--tRNA ligase (421 aa).

It belongs to the class-II aminoacyl-tRNA synthetase family. Homodimer.

The protein resides in the cytoplasm. The enzyme catalyses tRNA(His) + L-histidine + ATP = L-histidyl-tRNA(His) + AMP + diphosphate + H(+). This is Histidine--tRNA ligase from Coxiella burnetii (strain Dugway 5J108-111).